A 379-amino-acid polypeptide reads, in one-letter code: MSLKNIKPDQLKNLFQQNIPLMDVRAPVEFSQGSIPGAVNLPVMNDDERAQVGTVYKNQGNEAAVKLGHELVSGLVKEQRVAAWKSFVQAHPEAVFYCFRGGQRSRISQAWLKEAGVERPLLVGGFKAARNYLIKQIEEFSVRQELISVSGPTGSGKTHFLRGLKGCPVIDLEALARHRGSAFGNWEVPQPTQVDYENNLAREILLLEDKIHGKIKPLVEDESRLIGRISQPATFFIRLRSSPVIWIDEPLPVRVDNVFDDYILNSSIGKSLEAAPRCAEENDILRAQALQLFARYRQSLLAIQRKLGGLRAQEVMADLEKAELAYLNHAELSGNKVWIEKLLQYYYDPMYLGSLERRHVTVLFKGTRFEAEKFVHSLT.

Residues 15–138 form the Rhodanese domain; the sequence is FQQNIPLMDV…ARNYLIKQIE (124 aa). The active-site S-selanylcysteine intermediate is Cys-98.

It belongs to the SelU family. In terms of assembly, monomer.

The enzyme catalyses 5-methylaminomethyl-2-thiouridine(34) in tRNA + selenophosphate + (2E)-geranyl diphosphate + H2O + H(+) = 5-methylaminomethyl-2-selenouridine(34) in tRNA + (2E)-thiogeraniol + phosphate + diphosphate. The catalysed reaction is 5-methylaminomethyl-2-thiouridine(34) in tRNA + (2E)-geranyl diphosphate = 5-methylaminomethyl-S-(2E)-geranyl-thiouridine(34) in tRNA + diphosphate. It carries out the reaction 5-methylaminomethyl-S-(2E)-geranyl-thiouridine(34) in tRNA + selenophosphate + H(+) = 5-methylaminomethyl-2-(Se-phospho)selenouridine(34) in tRNA + (2E)-thiogeraniol. It catalyses the reaction 5-methylaminomethyl-2-(Se-phospho)selenouridine(34) in tRNA + H2O = 5-methylaminomethyl-2-selenouridine(34) in tRNA + phosphate. Functionally, involved in the post-transcriptional modification of the uridine at the wobble position (U34) of tRNA(Lys), tRNA(Glu) and tRNA(Gln). Catalyzes the conversion of 2-thiouridine (S2U-RNA) to 2-selenouridine (Se2U-RNA). Acts in a two-step process involving geranylation of 2-thiouridine (S2U) to S-geranyl-2-thiouridine (geS2U) and subsequent selenation of the latter derivative to 2-selenouridine (Se2U) in the tRNA chain. The sequence is that of tRNA 2-selenouridine synthase from Bdellovibrio bacteriovorus (strain ATCC 15356 / DSM 50701 / NCIMB 9529 / HD100).